Here is a 394-residue protein sequence, read N- to C-terminus: Probable purine permease 8 (394 aa).

The next 10 membrane-spanning stretches (helical) occupy residues tryptophan 45 to leucine 65, threonine 77 to phenylalanine 97, phenylalanine 113 to asparagine 133, valine 139 to phenylalanine 159, phenylalanine 172 to valine 192, valine 208 to valine 228, leucine 247 to glycine 267, threonine 289 to phenylalanine 309, phenylalanine 315 to phenylalanine 335, and isoleucine 344 to aspartate 364. Residues threonine 373–valine 394 form a disordered region. Basic and acidic residues predominate over residues proline 383–valine 394.

It belongs to the purine permeases (TC 2.A.7.14) family.

The protein resides in the membrane. The polypeptide is Probable purine permease 8 (PUP8) (Arabidopsis thaliana (Mouse-ear cress)).